A 956-amino-acid polypeptide reads, in one-letter code: DNA replication helicase (956 aa).

Residue 120–127 (GTAGAGKT) participates in ATP binding. Residues 658–694 (PINNHVDADSSQGGQSVPVSQRMEHGQEETHDIPCLS) are disordered. A compositionally biased stretch (low complexity) spans 667–678 (SSQGGQSVPVSQ). Residues 679-694 (RMEHGQEETHDIPCLS) show a composition bias toward basic and acidic residues.

Belongs to the herpesviridae helicase family. Associates with the primase and the primase-associated factor to form the helicase-primase complex.

The protein resides in the host nucleus. Its function is as follows. Component of the helicase/primase complex. Unwinds the DNA at the replication forks and generates single-stranded DNA for both leading and lagging strand synthesis. The primase synthesizes short RNA primers on the lagging strand that the polymerase elongates using dNTPs. Possesses helicase-like motifs and therefore may act as the helicase subunit of the complex. This is DNA replication helicase from Human cytomegalovirus (strain Merlin) (HHV-5).